Here is a 147-residue protein sequence, read N- to C-terminus: Hemoglobin subunit epsilon-M (147 aa).

The Globin domain maps to 3 to 147; the sequence is HFTPEDKTNI…VSSALGHKYH (145 aa). Phosphoserine occurs at positions 14 and 51. Heme b is bound by residues H64 and H93.

It belongs to the globin family. Red blood cells.

Functionally, hemoglobin epsilon chain is a beta-type chain found in early embryos. This chain is Hemoglobin subunit epsilon-M (HBE1), found in Didelphis virginiana (North American opossum).